We begin with the raw amino-acid sequence, 474 residues long: tRNA-2-methylthio-N(6)-dimethylallyladenosine synthase (474 aa).

The MTTase N-terminal domain occupies 3 to 120; it reads KKLHIKTWGC…LPEMIDQIEA (118 aa). [4Fe-4S] cluster contacts are provided by cysteine 12, cysteine 49, cysteine 83, cysteine 157, cysteine 161, and cysteine 164. Residues 143–375 form the Radical SAM core domain; the sequence is RADGPSAFVS…QDRITQQAMR (233 aa). A TRAM domain is found at 378 to 441; sequence RQMLGTVQRI…TNSLRGNFIR (64 aa).

This sequence belongs to the methylthiotransferase family. MiaB subfamily. As to quaternary structure, monomer. It depends on [4Fe-4S] cluster as a cofactor.

It localises to the cytoplasm. It carries out the reaction N(6)-dimethylallyladenosine(37) in tRNA + (sulfur carrier)-SH + AH2 + 2 S-adenosyl-L-methionine = 2-methylsulfanyl-N(6)-dimethylallyladenosine(37) in tRNA + (sulfur carrier)-H + 5'-deoxyadenosine + L-methionine + A + S-adenosyl-L-homocysteine + 2 H(+). Functionally, catalyzes the methylthiolation of N6-(dimethylallyl)adenosine (i(6)A), leading to the formation of 2-methylthio-N6-(dimethylallyl)adenosine (ms(2)i(6)A) at position 37 in tRNAs that read codons beginning with uridine. In Shewanella woodyi (strain ATCC 51908 / MS32), this protein is tRNA-2-methylthio-N(6)-dimethylallyladenosine synthase.